The sequence spans 91 residues: DNA-directed RNA polymerase subunit omega (91 aa).

It belongs to the RNA polymerase subunit omega family. In terms of assembly, the RNAP catalytic core consists of 2 alpha, 1 beta, 1 beta' and 1 omega subunit. When a sigma factor is associated with the core the holoenzyme is formed, which can initiate transcription.

It catalyses the reaction RNA(n) + a ribonucleoside 5'-triphosphate = RNA(n+1) + diphosphate. Promotes RNA polymerase assembly. Latches the N- and C-terminal regions of the beta' subunit thereby facilitating its interaction with the beta and alpha subunits. This is DNA-directed RNA polymerase subunit omega from Psychromonas ingrahamii (strain DSM 17664 / CCUG 51855 / 37).